The sequence spans 193 residues: Cytidylate kinase (193 aa).

12 to 20 lines the ATP pocket; it reads GLPGSGTTT.

Belongs to the cytidylate kinase family. Type 2 subfamily.

Its subcellular location is the cytoplasm. It catalyses the reaction CMP + ATP = CDP + ADP. It carries out the reaction dCMP + ATP = dCDP + ADP. The sequence is that of Cytidylate kinase from Methanopyrus kandleri (strain AV19 / DSM 6324 / JCM 9639 / NBRC 100938).